A 1358-amino-acid polypeptide reads, in one-letter code: Phosphoinositide 3-kinase regulatory subunit 4 (1358 aa).

Residue Gly2 is the site of N-myristoyl glycine attachment. Positions 26–324 constitute a Protein kinase domain; the sequence is FEYDKSLGST…AFPEIFYTFL (299 aa). ATP-binding positions include 32-40 and Lys53; that span reads LGSTRFFKV. The active-site Proton acceptor is Asp148. HEAT repeat units lie at residues 413–450, 458–495, and 572–610; these read ILLDRITPYLLHFSNDSVPRVRAEALRTLTKVLALVKE, IYPEYILPGIAHLAQDDATIVRLAYAENIALLAETALR, and KANDVLLSHMITFLNDKNDWHLRGAFFDSIVGVAAYVGW. Phosphoserine is present on residues Ser808, Ser813, Ser853, and Ser865. The interval 875-898 is disordered; sequence LPKGSDQEVIQTGKPPRSESSAGI. WD repeat units follow at residues 991 to 1030, 1040 to 1079, 1093 to 1134, 1139 to 1178, 1182 to 1223, and 1237 to 1278; these read EHKSAVNRIRVSDEHSLFATCSNDGTVKIWNSQKMEGKTT, RIGGRVKTLTFCQGSHYLAIASDNGAVQLLGIEASKLPKS, KEDG…NAWT, LKSGLITSFAVDIHQCWLCIGTSSGTMACWDMRFQLPISS, PSRA…RRFT, and PSPH…RSYV. Residues 1307-1326 are disordered; it reads KQKVGPSDDTPRRGPESLPV. Basic and acidic residues predominate over residues 1315–1326; sequence DTPRRGPESLPV. Thr1316 bears the Phosphothreonine mark. The stretch at 1327-1358 is one WD 7 repeat; the sequence is GHHDIITDVATFQTTQGFIVTASRDGIVKVWK.

This sequence belongs to the protein kinase superfamily. Ser/Thr protein kinase family. In terms of assembly, component of the PI3K (PI3KC3/PI3K-III/class III phosphatidylinositol 3-kinase) complex the core of which is composed of the catalytic subunit PIK3C3, the regulatory subunit PIK3R4 and BECN1 associating with additional regulatory/auxiliary subunits to form alternative complex forms. Alternative complex forms containing a fourth regulatory subunit in a mutually exclusive manner are PI3K complex I (PI3KC3-C1) containing ATG14, and PI3K complex II (PI3KC3-C2) containing UVRAG. PI3KC3-C1 displays a V-shaped architecture with PIK3R4 serving as a bridge between PIK3C3 and the ATG14:BECN1 subcomplex. Both, PI3KC3-C1 and PI3KC3-C2, can associate with further regulatory subunits, such as RUBCN, SH3GLB1/Bif-1, AMBRA1 and NRBF2. PI3KC3-C1 probably associates with PIK3CB. Interacts with RAB7A in the presence of PIK3C3/VPS34. Interacts with NRBF2. Interacts with ARMC3. It depends on Mn(2+) as a cofactor. In terms of processing, myristoylated. Probably autophosphorylated. In terms of tissue distribution, ubiquitously expressed.

The protein localises to the late endosome. It is found in the cytoplasmic vesicle. It localises to the autophagosome. The protein resides in the membrane. The enzyme catalyses L-seryl-[protein] + ATP = O-phospho-L-seryl-[protein] + ADP + H(+). It carries out the reaction L-threonyl-[protein] + ATP = O-phospho-L-threonyl-[protein] + ADP + H(+). Its function is as follows. Regulatory subunit of the PI3K complex that mediates formation of phosphatidylinositol 3-phosphate; different complex forms are believed to play a role in multiple membrane trafficking pathways: PI3KC3-C1 is involved in initiation of autophagosomes and PI3KC3-C2 in maturation of autophagosomes and endocytosis. Involved in regulation of degradative endocytic trafficking and cytokinesis, probably in the context of PI3KC3-C2. This chain is Phosphoinositide 3-kinase regulatory subunit 4 (PIK3R4), found in Homo sapiens (Human).